A 372-amino-acid polypeptide reads, in one-letter code: Glutamate 5-kinase (372 aa).

Residue Lys-14 participates in ATP binding. Residues Ser-54, Asp-141, and Asn-153 each coordinate substrate. 173–174 contributes to the ATP binding site; that stretch reads TD. The PUA domain maps to 280–358; the sequence is RGTLVLDDGA…DAIESLLGYS (79 aa).

This sequence belongs to the glutamate 5-kinase family.

It is found in the cytoplasm. The enzyme catalyses L-glutamate + ATP = L-glutamyl 5-phosphate + ADP. It participates in amino-acid biosynthesis; L-proline biosynthesis; L-glutamate 5-semialdehyde from L-glutamate: step 1/2. Functionally, catalyzes the transfer of a phosphate group to glutamate to form L-glutamate 5-phosphate. This Pseudomonas entomophila (strain L48) protein is Glutamate 5-kinase.